The chain runs to 84 residues: Putative membrane protein insertion efficiency factor (84 aa).

This sequence belongs to the UPF0161 family.

Its subcellular location is the cell inner membrane. Could be involved in insertion of integral membrane proteins into the membrane. This chain is Putative membrane protein insertion efficiency factor, found in Acidiphilium cryptum (strain JF-5).